The sequence spans 156 residues: ATP synthase subunit b (156 aa).

The helical transmembrane segment at 3 to 23 (ITFTIFAQSLAFAALIWIVAT) threads the bilayer.

It belongs to the ATPase B chain family. As to quaternary structure, F-type ATPases have 2 components, F(1) - the catalytic core - and F(0) - the membrane proton channel. F(1) has five subunits: alpha(3), beta(3), gamma(1), delta(1), epsilon(1). F(0) has three main subunits: a(1), b(2) and c(10-14). The alpha and beta chains form an alternating ring which encloses part of the gamma chain. F(1) is attached to F(0) by a central stalk formed by the gamma and epsilon chains, while a peripheral stalk is formed by the delta and b chains.

The protein resides in the cell inner membrane. In terms of biological role, f(1)F(0) ATP synthase produces ATP from ADP in the presence of a proton or sodium gradient. F-type ATPases consist of two structural domains, F(1) containing the extramembraneous catalytic core and F(0) containing the membrane proton channel, linked together by a central stalk and a peripheral stalk. During catalysis, ATP synthesis in the catalytic domain of F(1) is coupled via a rotary mechanism of the central stalk subunits to proton translocation. Component of the F(0) channel, it forms part of the peripheral stalk, linking F(1) to F(0). The chain is ATP synthase subunit b from Xylella fastidiosa (strain 9a5c).